The primary structure comprises 160 residues: Ribosomal RNA large subunit methyltransferase H (160 aa).

Residues L76 and G108 each contribute to the S-adenosyl-L-methionine site.

This sequence belongs to the RNA methyltransferase RlmH family. Homodimer.

The protein localises to the cytoplasm. It carries out the reaction pseudouridine(1915) in 23S rRNA + S-adenosyl-L-methionine = N(3)-methylpseudouridine(1915) in 23S rRNA + S-adenosyl-L-homocysteine + H(+). Its function is as follows. Specifically methylates the pseudouridine at position 1915 (m3Psi1915) in 23S rRNA. The sequence is that of Ribosomal RNA large subunit methyltransferase H from Bradyrhizobium diazoefficiens (strain JCM 10833 / BCRC 13528 / IAM 13628 / NBRC 14792 / USDA 110).